Reading from the N-terminus, the 271-residue chain is MYDRIGGSSTRTSQTDEPSQSVDSGSFTETLADLAPQWSSRSGELPDKMGACCSKPDTLDANVQTSSASEPSTSSPESPATSLFEYRTADLRDANVDGICVGLTAEWFRNLSNSPSTRMSALTPGSQTHASAAERQQQYQRLKDQLRSRGAGSSQADLQAQNTILEEAGLEPAGEEKRFAFGKSSNVKSMVNEINEDGSNHLLSLYFAEGGAHTVATSASNGTTTLFDPNYGEFTVRSDPDQMASLLQSLANRYRNPNGQHLSTITTQRMQ.

The interval 1–81 (MYDRIGGSST…STSSPESPAT (81 aa)) is disordered. The span at 7 to 29 (GSSTRTSQTDEPSQSVDSGSFTE) shows a compositional bias: polar residues. The segment covering 65–81 (TSSASEPSTSSPESPAT) has biased composition (low complexity). Residue Cys-100 is part of the active site. Positions 114-136 (SPSTRMSALTPGSQTHASAAERQ) are disordered. Residues His-213 and Asp-228 contribute to the active site.

The protein belongs to the peptidase C58 family.

Potential cysteine protease, which may play a central role after invasion of host cell. This is Putative cysteine protease YopT-like blr2140 from Bradyrhizobium diazoefficiens (strain JCM 10833 / BCRC 13528 / IAM 13628 / NBRC 14792 / USDA 110).